Reading from the N-terminus, the 209-residue chain is Large ribosomal subunit protein bL25 (209 aa).

This sequence belongs to the bacterial ribosomal protein bL25 family. CTC subfamily. Part of the 50S ribosomal subunit; part of the 5S rRNA/L5/L18/L25 subcomplex. Contacts the 5S rRNA. Binds to the 5S rRNA independently of L5 and L18.

This is one of the proteins that binds to the 5S RNA in the ribosome where it forms part of the central protuberance. The sequence is that of Large ribosomal subunit protein bL25 from Xanthomonas campestris pv. campestris (strain 8004).